The chain runs to 330 residues: Succinylglutamate desuccinylase (330 aa).

Zn(2+)-binding residues include His53, Glu56, and His147. Residue Glu210 is part of the active site.

Belongs to the AspA/AstE family. Succinylglutamate desuccinylase subfamily. Requires Zn(2+) as cofactor.

The enzyme catalyses N-succinyl-L-glutamate + H2O = L-glutamate + succinate. It functions in the pathway amino-acid degradation; L-arginine degradation via AST pathway; L-glutamate and succinate from L-arginine: step 5/5. Its function is as follows. Transforms N(2)-succinylglutamate into succinate and glutamate. In Yersinia pseudotuberculosis serotype O:3 (strain YPIII), this protein is Succinylglutamate desuccinylase.